The chain runs to 102 residues: Small ubiquitin-related modifier 1-A (102 aa).

The interval 1-20 is disordered; sequence MSDQEAKPSSEDLGDKKDGG. One can recognise a Ubiquitin-like domain in the interval 21–98; it reads DYIKLKVIGQ…IEVYQEQTGG (78 aa). Residue Gly-98 forms a Glycyl lysine isopeptide (Gly-Lys) (interchain with K-? in acceptor proteins) linkage. Positions 99–102 are excised as a propeptide; it reads HSTF.

This sequence belongs to the ubiquitin family. SUMO subfamily. As to quaternary structure, interacts with sae2, ube2i, ranbp2, pias1 and pias2. Covalently attached to a number of proteins including rangap1 and ranbp2. Interacts with sox9 and sox10. Post-translationally, cleavage of precursor form by a sentrin-specific protease is necessary for function.

It is found in the nucleus membrane. It localises to the nucleus speckle. The protein localises to the cytoplasm. The protein resides in the nucleus. Its subcellular location is the PML body. It is found in the cell membrane. Ubiquitin-like protein that can be covalently attached to proteins as a monomer or a lysine-linked polymer. Covalent attachment via an isopeptide bond to its substrates requires prior activation by the E1 complex sae1-sae2 and linkage to the E2 enzyme ube2i. This post-translational modification on lysine residues of proteins plays a crucial role in a number of cellular processes such as nuclear transport, DNA replication and repair, mitosis and signal transduction. Polymeric sumo1 chains are also susceptible to polyubiquitination which functions as a signal for proteasomal degradation of modified proteins. In Xenopus laevis (African clawed frog), this protein is Small ubiquitin-related modifier 1-A (sumo1-a).